Here is a 107-residue protein sequence, read N- to C-terminus: DNA polymerase delta subunit 4 (107 aa).

A PCNA-interaction protein motif (PIP box) motif is present at residues 1-16 (MGRKRLITDSYPVVKR). A disordered region spans residues 1-35 (MGRKRLITDSYPVVKRREGSAGHSKGELAPDLGEE). Over residues 15-28 (KRREGSAGHSKGEL) the composition is skewed to basic and acidic residues.

The protein belongs to the DNA polymerase delta subunit 4 family. As to quaternary structure, component of the tetrameric DNA polymerase delta complex (Pol-delta4), which consists of POLD1/p125, POLD2/p50, POLD3/p66/p68 and POLD4/p12, with POLD1 bearing DNA polymerase and 3' to 5' proofreading exonuclease activities. Within this complex, directly interacts with POLD1 and POLD2. Directly interacts with PCNA, as do POLD1 and POLD3; this interaction stimulates Pol-delta4 polymerase activity. As POLD1 and POLD2, directly interacts with WRNIP1; this interaction stimulates DNA polymerase delta-mediated DNA synthesis, independently of the presence of PCNA, possibly by increasing initiation frequency. Upon genotoxic stress induced by DNA damaging agents or by replication stress, POLD4 is proteolytically degraded and Pol-delta4 is converted into a trimeric form of the complex (Pol-delta3) that has an increased proofreading activity. The DNA polymerase delta complex interacts with POLDIP2; this interaction is probably mediated through direct binding to POLD2. In terms of processing, ubiquitinated; undergoes 'Lys-48'-linked ubiquitination in response to UV irradiation, leading to proteasomal degradation. This modification is partly mediated by RNF8 and by the DCX(DTL) E3 ubiquitin ligase complex (also called CRL4(CDT2)). Efficient degradation requires the presence of PCNA and is required for the inhibition of fork progression after DNA damage.

The protein localises to the nucleus. Functionally, as a component of the tetrameric DNA polymerase delta 4 complex (Pol-delta4), plays a role in high fidelity genome replication and repair. Within this complex, increases the rate of DNA synthesis and decreases fidelity by regulating POLD1 polymerase and proofreading 3' to 5' exonuclease activity. Pol-delta4 participates in Okazaki fragment processing, through both the short flap pathway, as well as a nick translation system. Under conditions of DNA replication stress, required for the repair of broken replication forks through break-induced replication (BIR), a mechanism that may induce segmental genomic duplications of up to 200 kb. Involved in Pol-delta4 translesion synthesis (TLS) of templates carrying O6-methylguanine or abasic sites. Its degradation in response to DNA damage is required for the inhibition of fork progression and cell survival. This is DNA polymerase delta subunit 4 (POLD4) from Bos taurus (Bovine).